Consider the following 355-residue polypeptide: Uroporphyrinogen decarboxylase (355 aa).

Substrate contacts are provided by residues 36–40 (RQAGR), Asp85, Tyr160, Ser215, and His334.

Belongs to the uroporphyrinogen decarboxylase family. In terms of assembly, homodimer.

Its subcellular location is the cytoplasm. It catalyses the reaction uroporphyrinogen III + 4 H(+) = coproporphyrinogen III + 4 CO2. It functions in the pathway porphyrin-containing compound metabolism; protoporphyrin-IX biosynthesis; coproporphyrinogen-III from 5-aminolevulinate: step 4/4. Catalyzes the decarboxylation of four acetate groups of uroporphyrinogen-III to yield coproporphyrinogen-III. The sequence is that of Uroporphyrinogen decarboxylase from Rhodococcus erythropolis (strain PR4 / NBRC 100887).